We begin with the raw amino-acid sequence, 482 residues long: tRNA sulfurtransferase (482 aa).

The region spanning 61–165 is the THUMP domain; that stretch reads AAIVAELTRI…DERLILVTAR (105 aa). ATP contacts are provided by residues 183 to 184, K265, G287, and Q296; that span reads LI. An intrachain disulfide couples C344 to C456. Residues 404–482 enclose the Rhodanese domain; it reads FSHNDVILDI…GFKNVKVYRP (79 aa). C456 serves as the catalytic Cysteine persulfide intermediate.

Belongs to the ThiI family.

It localises to the cytoplasm. It catalyses the reaction [ThiI sulfur-carrier protein]-S-sulfanyl-L-cysteine + a uridine in tRNA + 2 reduced [2Fe-2S]-[ferredoxin] + ATP + H(+) = [ThiI sulfur-carrier protein]-L-cysteine + a 4-thiouridine in tRNA + 2 oxidized [2Fe-2S]-[ferredoxin] + AMP + diphosphate. The catalysed reaction is [ThiS sulfur-carrier protein]-C-terminal Gly-Gly-AMP + S-sulfanyl-L-cysteinyl-[cysteine desulfurase] + AH2 = [ThiS sulfur-carrier protein]-C-terminal-Gly-aminoethanethioate + L-cysteinyl-[cysteine desulfurase] + A + AMP + 2 H(+). It functions in the pathway cofactor biosynthesis; thiamine diphosphate biosynthesis. Its function is as follows. Catalyzes the ATP-dependent transfer of a sulfur to tRNA to produce 4-thiouridine in position 8 of tRNAs, which functions as a near-UV photosensor. Also catalyzes the transfer of sulfur to the sulfur carrier protein ThiS, forming ThiS-thiocarboxylate. This is a step in the synthesis of thiazole, in the thiamine biosynthesis pathway. The sulfur is donated as persulfide by IscS. This is tRNA sulfurtransferase from Erwinia tasmaniensis (strain DSM 17950 / CFBP 7177 / CIP 109463 / NCPPB 4357 / Et1/99).